A 410-amino-acid chain; its full sequence is Peptidase T (410 aa).

Histidine 78 lines the Zn(2+) pocket. Residue aspartate 80 is part of the active site. A Zn(2+)-binding site is contributed by aspartate 140. Glutamate 173 functions as the Proton acceptor in the catalytic mechanism. Glutamate 174, aspartate 196, and histidine 379 together coordinate Zn(2+).

The protein belongs to the peptidase M20B family. Zn(2+) is required as a cofactor.

The protein localises to the cytoplasm. The enzyme catalyses Release of the N-terminal residue from a tripeptide.. Cleaves the N-terminal amino acid of tripeptides. This chain is Peptidase T, found in Pectobacterium carotovorum subsp. carotovorum (strain PC1).